The primary structure comprises 382 residues: F-box/LRR-repeat/kelch-repeat protein At1g09650 (382 aa).

One can recognise an F-box domain in the interval 7 to 52 (CLMMESLPHEVVECILERLDADPLLRFKAVSKQWKSTIESPFFQRR). An LRR 1 repeat occupies 78–101 (IEALTTLVLGSSSSVKIPTPWEEE). A Kelch 1 repeat occupies 180–227 (PVWLYNSIEIGLENATTCEVFDFSTNAWRYVSPAAPYRIVGCPAPVCV). An LRR 2 repeat occupies 239–262 (ETKILSFDLHTETFQVVSKAPFAN). The stretch at 270–319 (MCNLDNRLCVSEMKLPNQVIWSFNSGNKTWHKMCSINLDITSRWFGPTQV) is one Kelch 2 repeat.

In Arabidopsis thaliana (Mouse-ear cress), this protein is F-box/LRR-repeat/kelch-repeat protein At1g09650.